The sequence spans 80 residues: Raniseptin-2 (80 aa).

Positions Met1–Cys22 are cleaved as a signal peptide. The propeptide occupies Glu23 to Glu49. Positions Arg27–Glu46 are disordered. Acidic residues predominate over residues Glu30–Glu44.

This sequence belongs to the frog skin active peptide (FSAP) family. Dermaseptin subfamily. Expressed by the skin glands.

It is found in the secreted. In terms of biological role, has antibacterial activity. This Boana raniceps (Chaco tree frog) protein is Raniseptin-2.